The chain runs to 117 residues: Ribonuclease P protein component (117 aa).

The protein belongs to the RnpA family. In terms of assembly, consists of a catalytic RNA component (M1 or rnpB) and a protein subunit.

It catalyses the reaction Endonucleolytic cleavage of RNA, removing 5'-extranucleotides from tRNA precursor.. Its function is as follows. RNaseP catalyzes the removal of the 5'-leader sequence from pre-tRNA to produce the mature 5'-terminus. It can also cleave other RNA substrates such as 4.5S RNA. The protein component plays an auxiliary but essential role in vivo by binding to the 5'-leader sequence and broadening the substrate specificity of the ribozyme. This Staphylococcus aureus (strain MW2) protein is Ribonuclease P protein component.